A 503-amino-acid polypeptide reads, in one-letter code: Puromycin resistance protein pur8 (503 aa).

The Cytoplasmic portion of the chain corresponds to 1-24 (MARKPDISAVPVESAACQGPDPRR). A helical membrane pass occupies residues 25–45 (WWGLVVILAAQLLVVLDGTVV). The Extracellular segment spans residues 46 to 64 (NIALPSVQRDLGMSDTSRQ). The helical transmembrane segment at 65 to 85 (WVITAYTLAFGGLLLLGGRVA) threads the bilayer. Topologically, residues 86-92 (DAFGRRR) are cytoplasmic. Residues 93–113 (IFAVGILGFGLASLLGGAAPD) form a helical membrane-spanning segment. Residues 114 to 122 (PGTLFLARA) are Extracellular-facing. The helical transmembrane segment at 123 to 143 (LQGVFAAALAPAALALINTLF) threads the bilayer. The Cytoplasmic segment spans residues 144–152 (TEPGERGKA). A helical membrane pass occupies residues 153–173 (FGVYGAVSGGGAAVGLLAGGL). The Extracellular segment spans residues 174–181 (LTEYLDWR). A helical transmembrane segment spans residues 182 to 202 (WCLYVNAPVALLALLGCRLLP). Over 203 to 212 (RDRRTGRAVR) the chain is Cytoplasmic. A helical membrane pass occupies residues 213–233 (LDLPGTLLGCGGLVAIVYAFA). Topologically, residues 234 to 241 (EAESGWGD) are extracellular. The helical transmembrane segment at 242-262 (PLVVRLLVLGVLMLVAFALVE) threads the bilayer. Topologically, residues 263 to 280 (RRVQDPLLPPGVVAHRVR) are cytoplasmic. Residues 281–301 (GGSFLVVGLPQIGLFGLFLFL) traverse the membrane as a helical segment. At 302-313 (TYYLQGILDYSP) the chain is on the extracellular side. Residues 314–334 (VLTGVAFLPLGLGIAVGSSLI) form a helical membrane-spanning segment. The Cytoplasmic portion of the chain corresponds to 335 to 346 (AARLLPRTRPRT). A helical membrane pass occupies residues 347-367 (LIVGALLAAAAGMALLTRLEP). The Extracellular segment spans residues 368 to 371 (DTPQ). Residues 372–392 (VYLTHLLPAQILIGLGIGCMM) traverse the membrane as a helical segment. The Cytoplasmic portion of the chain corresponds to 393 to 422 (MPAMHTATARVAPHEAGAAAAVVNSAQQVG). Residues 423-443 (GALGVALLNTVSTGATAAYLA) traverse the membrane as a helical segment. At 444-461 (DHGTSPAATVDGTVHGYT) the chain is on the extracellular side. The chain crosses the membrane as a helical span at residues 462-482 (VAIAFAVGVLLLTAVLAWVLI). Over 483 to 503 (DSRTEAADETGSASVTPARPR) the chain is Cytoplasmic.

Belongs to the major facilitator superfamily. EmrB family.

The protein resides in the cell membrane. May be involved in active puromycin efflux energized by a proton-dependent electrochemical gradient. In addition, it could be implicated in secreting N-acetylpuromycin, the last intermediate of the puromycin biosynthesis pathway, to the environment. This chain is Puromycin resistance protein pur8 (pur8), found in Streptomyces alboniger.